We begin with the raw amino-acid sequence, 425 residues long: 5-hydroxytryptamine receptor 7 (425 aa).

Residues 1-72 (MLIQVQPSHL…LLYGDTEKIV (72 aa)) are Extracellular-facing. Asn14, Asn41, and Asn51 each carry an N-linked (GlcNAc...) asparagine glycan. A helical membrane pass occupies residues 73–97 (IGVVLSIITLFTIAGNALVIISVCI). At 98 to 107 (VKKLRQPSNY) the chain is on the cytoplasmic side. A helical transmembrane segment spans residues 108-129 (LVVSLAAADLSVAVAVMPFVII). Residues 130-141 (TDLVGGEWLFGK) lie on the Extracellular side of the membrane. A helical transmembrane segment spans residues 142–167 (VFCNVFIAMDVMCCTASIMTLCVISV). A disulfide bridge connects residues Cys144 and Cys220. Position 151 (Asp151) interacts with serotonin. Over 168 to 187 (DRYLGITRPLTYPARQNGKL) the chain is Cytoplasmic. A helical transmembrane segment spans residues 188–208 (MAKMVFIVWLLSASITLPPLF). The Extracellular segment spans residues 209 to 226 (GWAKNVNVERVCLISQDF). The helical transmembrane segment at 227-249 (GYTVYSTAVAFYIPMTVMLVMYQ) threads the bilayer. The Cytoplasmic portion of the chain corresponds to 250–322 (RIFVAAKISA…SIFKREQKAA (73 aa)). A helical transmembrane segment spans residues 323-348 (RTLGIIVGAFTFCWLPFFLLSTARPF). Over 349–359 (ICGIMCSCMPL) the chain is Extracellular. The helical transmembrane segment at 360–383 (RLERTLLWLGYTNSLINPLIYAFF) threads the bilayer. The Cytoplasmic portion of the chain corresponds to 384-425 (NRDLRTTFWNLLRCKYTNINRRLSAASMHEALKVTERHEGIL). Cys397 carries S-palmitoyl cysteine lipidation.

This sequence belongs to the G-protein coupled receptor 1 family.

It localises to the cell membrane. Its function is as follows. G-protein coupled receptor for 5-hydroxytryptamine (serotonin), a biogenic hormone that functions as a neurotransmitter, a hormone and a mitogen. Ligand binding causes a conformation change that triggers signaling via guanine nucleotide-binding proteins (G proteins) and modulates the activity of downstream effectors. HTR7 is coupled to G(s) G alpha proteins and mediates activation of adenylate cyclase activity. This is 5-hydroxytryptamine receptor 7 (htr7) from Xenopus laevis (African clawed frog).